Reading from the N-terminus, the 328-residue chain is MITVVGGTFSKLHKGHKALLNTAIDTGNEVVIGLTSDEYVKKNKVYPAIPYSVRYRTLYNYMIKRTNKFRIRQIDDRNGNAPYEKDYEVIVVSPETYPRSLKINEIRISNGLPPLKIIRVPYVLAQDLFPISSTRIINGEIDTNGKRITPLKVGISTRNEAKIQAVEKFVRRLVKNYQIVKNENYNLKTQQPFGEETMELATQRAMEALKDNDYSVGIESGIIYESFSKKYYDVHYCVVIDRFGNVTRGMSSGFEIPDHIVDRMKRDRTFSEAYSGYLNVQEIDQSEGIIGKISEGKLRRIDLIEESIRNAFILRLDPDFYDSTYTPP.

The phosphopantetheine adenylyltransferase stretch occupies residues 1-152 (MITVVGGTFS…TNGKRITPLK (152 aa)). An inosine/xanthosine triphosphatase region spans residues 153–328 (VGISTRNEAK…DFYDSTYTPP (176 aa)).

This sequence in the N-terminal section; belongs to the eukaryotic CoaD family. The protein in the C-terminal section; belongs to the YjjX NTPase family. It depends on Mg(2+) as a cofactor. Mn(2+) serves as cofactor.

Its subcellular location is the cytoplasm. The catalysed reaction is (R)-4'-phosphopantetheine + ATP + H(+) = 3'-dephospho-CoA + diphosphate. The enzyme catalyses XTP + H2O = XDP + phosphate + H(+). It carries out the reaction ITP + H2O = IDP + phosphate + H(+). It functions in the pathway cofactor biosynthesis; coenzyme A biosynthesis. Reversibly transfers an adenylyl group from ATP to 4'-phosphopantetheine, yielding dephospho-CoA (dPCoA) and pyrophosphate. In terms of biological role, phosphatase that hydrolyzes non-canonical purine nucleotides such as XTP and ITP to their respective diphosphate derivatives. Probably excludes non-canonical purines from DNA/RNA precursor pool, thus preventing their incorporation into DNA/RNA and avoiding chromosomal lesions. The sequence is that of Bifunctional phosphopantetheine adenylyltransferase/NTP phosphatase (coaD) from Thermoplasma acidophilum (strain ATCC 25905 / DSM 1728 / JCM 9062 / NBRC 15155 / AMRC-C165).